Here is a 373-residue protein sequence, read N- to C-terminus: tRNA (guanine(26)-N(2))-dimethyltransferase (373 aa).

Residues 2–365 (KIISEGETKL…AELSDLVVLI (364 aa)) form the Trm1 methyltransferase domain. R35, R66, D86, D113, and A114 together coordinate S-adenosyl-L-methionine.

Belongs to the class I-like SAM-binding methyltransferase superfamily. Trm1 family.

It catalyses the reaction guanosine(26) in tRNA + 2 S-adenosyl-L-methionine = N(2)-dimethylguanosine(26) in tRNA + 2 S-adenosyl-L-homocysteine + 2 H(+). Its function is as follows. Dimethylates a single guanine residue at position 26 of a number of tRNAs using S-adenosyl-L-methionine as donor of the methyl groups. This is tRNA (guanine(26)-N(2))-dimethyltransferase from Methanococcus maripaludis (Methanococcus deltae).